The primary structure comprises 279 residues: MWGSGELLVAWFLVLAAGGTTEHVYRPSRRVCTVGVSGGSISETFVQRVYQPYLTTCDGHRACSTYRTIYRTAYRIAYRHSPGLTPSRPRYACCPGWKRTNGLPGACGAAICQPPCGNEGSCIRPGRCRCPVGWQGDTCQIDVDECSTGEARCPQRCVNTVGSYWCQCWEGQSPSADGVLCLPKEGPSPVAPSPTPGVDSVVREEVYKLQARVDVLEQKLQLVLAPLHSLASRSPEHGLQDPGSLLAHSFQQLDRIDSLSEQVSFLEEQLGSCSCKKDL.

Positions 1–21 are cleaved as a signal peptide; it reads MWGSGELLVAWFLVLAAGGTT. In terms of domain architecture, EMI spans 28-109; that stretch reads SRRVCTVGVS…TNGLPGACGA (82 aa). 9 disulfides stabilise this stretch: Cys32/Cys94, Cys57/Cys63, Cys93/Cys107, Cys112/Cys122, Cys116/Cys128, Cys130/Cys139, Cys146/Cys157, Cys153/Cys166, and Cys168/Cys181. The 33-residue stretch at 108–140 folds into the EGF-like 1 domain; the sequence is GAAICQPPCGNEGSCIRPGRCRCPVGWQGDTCQ. Residues 131–133 carry the Cell attachment site motif; that stretch reads PVG. The EGF-like 2; calcium-binding domain occupies 142–182; that stretch reads DVDECSTGEARCPQRCVNTVGSYWCQCWEGQSPSADGVLCL. Coiled coils occupy residues 200–224 and 250–274; these read SVVREEVYKLQARVDVLEQKLQLVL and FQQLDRIDSLSEQVSFLEEQLGSCS.

As to quaternary structure, interacts with ITGAV/ITGB3 in an RGD-dependent manner, increasing endothelial cell's motility.

It is found in the secreted. Its subcellular location is the extracellular space. Functionally, regulates vascular tubulogenesis in vivo. Inhibits platelet-derived growth factor (PDGF)-BB-induced smooth muscle cell migration and promotes endothelial cell adhesion to the extracellular matrix and angiogenesis. This Rattus norvegicus (Rat) protein is Epidermal growth factor-like protein 7 (Egfl7).